A 418-amino-acid chain; its full sequence is UDP-N-acetyl-D-mannosamine dehydrogenase (418 aa).

NAD(+) contacts are provided by Y10, I11, D30, T85, and T119. R152, V153, K204, N208, R211, H242, R244, T249, and G255 together coordinate UDP-N-acetyl-alpha-D-mannosaminouronate. K204 serves as the catalytic Proton donor/acceptor. C258 acts as the Nucleophile in catalysis. Residue K261 coordinates NAD(+). Residues Y318 and K319 each coordinate UDP-N-acetyl-alpha-D-mannosaminouronate. R326 serves as a coordination point for NAD(+). Residue R398 coordinates UDP-N-acetyl-alpha-D-mannosaminouronate.

The protein belongs to the UDP-glucose/GDP-mannose dehydrogenase family. Homodimer.

It catalyses the reaction UDP-N-acetyl-alpha-D-mannosamine + 2 NAD(+) + H2O = UDP-N-acetyl-alpha-D-mannosaminouronate + 2 NADH + 3 H(+). Its function is as follows. Catalyzes the four-electron oxidation of UDP-N-acetyl-D-mannosamine (UDP-ManNAc), reducing NAD(+) and releasing UDP-N-acetylmannosaminuronic acid (UDP-ManNAcA). This is UDP-N-acetyl-D-mannosamine dehydrogenase from Pyrococcus horikoshii (strain ATCC 700860 / DSM 12428 / JCM 9974 / NBRC 100139 / OT-3).